The chain runs to 350 residues: Methylthioribose-1-phosphate isomerase (350 aa).

Residues 47–49 (RGA), Arg90, and Gln197 each bind substrate. Asp238 functions as the Proton donor in the catalytic mechanism. 248-249 (NK) serves as a coordination point for substrate.

Belongs to the eIF-2B alpha/beta/delta subunits family. MtnA subfamily.

The enzyme catalyses 5-(methylsulfanyl)-alpha-D-ribose 1-phosphate = 5-(methylsulfanyl)-D-ribulose 1-phosphate. Its pathway is amino-acid biosynthesis; L-methionine biosynthesis via salvage pathway; L-methionine from S-methyl-5-thio-alpha-D-ribose 1-phosphate: step 1/6. In terms of biological role, catalyzes the interconversion of methylthioribose-1-phosphate (MTR-1-P) into methylthioribulose-1-phosphate (MTRu-1-P). The sequence is that of Methylthioribose-1-phosphate isomerase from Nitratidesulfovibrio vulgaris (strain DP4) (Desulfovibrio vulgaris).